The chain runs to 410 residues: ORC1-type DNA replication protein 2 (410 aa).

Residues 60–65 (GIGKTT), tyrosine 213, and arginine 225 contribute to the ATP site.

This sequence belongs to the CDC6/cdc18 family.

In terms of biological role, involved in regulation of DNA replication. Binds DNA. The polypeptide is ORC1-type DNA replication protein 2 (orc2) (Aeropyrum pernix (strain ATCC 700893 / DSM 11879 / JCM 9820 / NBRC 100138 / K1)).